A 301-amino-acid polypeptide reads, in one-letter code: tRNA-cytidine(32) 2-sulfurtransferase (301 aa).

The short motif at 47–52 (SGGKDS) is the PP-loop motif element. Residues Cys122, Cys125, and Cys213 each contribute to the [4Fe-4S] cluster site.

Belongs to the TtcA family. As to quaternary structure, homodimer. It depends on Mg(2+) as a cofactor. Requires [4Fe-4S] cluster as cofactor.

It is found in the cytoplasm. The catalysed reaction is cytidine(32) in tRNA + S-sulfanyl-L-cysteinyl-[cysteine desulfurase] + AH2 + ATP = 2-thiocytidine(32) in tRNA + L-cysteinyl-[cysteine desulfurase] + A + AMP + diphosphate + H(+). The protein operates within tRNA modification. Functionally, catalyzes the ATP-dependent 2-thiolation of cytidine in position 32 of tRNA, to form 2-thiocytidine (s(2)C32). The sulfur atoms are provided by the cysteine/cysteine desulfurase (IscS) system. The polypeptide is tRNA-cytidine(32) 2-sulfurtransferase (Photobacterium profundum (strain SS9)).